We begin with the raw amino-acid sequence, 150 residues long: Ribonuclease H (150 aa).

Residues 7–148 (ERPRVEIWTD…VDQLATRGRE (142 aa)) enclose the RNase H type-1 domain. 4 residues coordinate Mg(2+): Asp16, Glu54, Asp76, and Asp140.

The protein belongs to the RNase H family. In terms of assembly, monomer. It depends on Mg(2+) as a cofactor.

The protein localises to the cytoplasm. The catalysed reaction is Endonucleolytic cleavage to 5'-phosphomonoester.. Endonuclease that specifically degrades the RNA of RNA-DNA hybrids. The polypeptide is Ribonuclease H (Gluconobacter oxydans (strain 621H) (Gluconobacter suboxydans)).